A 135-amino-acid chain; its full sequence is Small ribosomal subunit protein uS11 (135 aa).

The tract at residues 1–22 (MPPKSRTAAGAKKVRRKEKKNV) is disordered.

This sequence belongs to the universal ribosomal protein uS11 family. In terms of assembly, part of the 30S ribosomal subunit. Interacts with proteins S7 and S18. Binds to IF-3.

Located on the platform of the 30S subunit, it bridges several disparate RNA helices of the 16S rRNA. Forms part of the Shine-Dalgarno cleft in the 70S ribosome. This Nocardioides sp. (strain ATCC BAA-499 / JS614) protein is Small ribosomal subunit protein uS11.